We begin with the raw amino-acid sequence, 263 residues long: Leukocyte-associated immunoglobulin-like receptor 1 (263 aa).

The signal sequence occupies residues 1-21; the sequence is MPLHSVIVLVLVLCLGWKSNT. An Ig-like C2-type domain is found at 27–112; it reads SDFTICAEPG…VWSQRSNDLQ (86 aa). Residues Cys-49 and Cys-96 are joined by a disulfide bond. Asn-87 is a glycosylation site (N-linked (GlcNAc...) asparagine). Residues 144 to 164 traverse the membrane as a helical segment; it reads ILTVVSVIFLLCLSLFLFCFL. 2 consecutive short sequence motifs (ITIM motif) follow at residues 225 to 230 and 255 to 260; these read VTYAQL and STYAAI. Residues Tyr-227 and Tyr-257 each carry the phosphotyrosine modification.

In terms of assembly, interacts with SH2 domains of tyrosine-protein phosphatases PTPN6 and PTPN11. The interaction with PTPN6 is constitutive. Interacts with the SH2 domain of CSK. Binds with high affinity to extracellular matrix collagens, the interaction is functionally important. Phosphorylation at Tyr-227 and Tyr-257 activates it. May be phosphorylated by LCK. Post-translationally, N-glycosylated. In terms of tissue distribution, expressed in lymphoid and non-lymphoid organs.

The protein resides in the membrane. In terms of biological role, functions as an inhibitory receptor that plays a constitutive negative regulatory role on cytolytic function of natural killer (NK) cells, B-cells and T-cells. Activation by Tyr phosphorylation results in recruitment and activation of the phosphatases PTPN6 and PTPN11. It also reduces the increase of intracellular calcium evoked by B-cell receptor ligation. May also play its inhibitory role independently of SH2-containing phosphatases. Modulates cytokine production in CD4+ T-cells, down-regulating IL2 and IFNG production while inducing secretion of transforming growth factor beta. Also down-regulates IgG and IgE production in B-cells as well as IL8, IL10 and TNF secretion. Inhibits proliferation and induces apoptosis in myeloid leukemia cell lines as well as prevents nuclear translocation of NF-kappa-B p65 subunit/RELA and phosphorylation of I-kappa-B alpha/CHUK in these cells. Inhibits the differentiation of peripheral blood precursors towards dendritic cells. In Rattus norvegicus (Rat), this protein is Leukocyte-associated immunoglobulin-like receptor 1 (Lair1).